Reading from the N-terminus, the 115-residue chain is Large ribosomal subunit protein bL19 (115 aa).

This sequence belongs to the bacterial ribosomal protein bL19 family.

This protein is located at the 30S-50S ribosomal subunit interface and may play a role in the structure and function of the aminoacyl-tRNA binding site. In Pectobacterium atrosepticum (strain SCRI 1043 / ATCC BAA-672) (Erwinia carotovora subsp. atroseptica), this protein is Large ribosomal subunit protein bL19.